Here is a 432-residue protein sequence, read N- to C-terminus: Serine hydroxymethyltransferase (432 aa).

(6S)-5,6,7,8-tetrahydrofolate is bound by residues Leu-131 and 135-137 (GHL). Lys-240 is subject to N6-(pyridoxal phosphate)lysine.

It belongs to the SHMT family. As to quaternary structure, homodimer. It depends on pyridoxal 5'-phosphate as a cofactor.

The protein resides in the cytoplasm. The enzyme catalyses (6R)-5,10-methylene-5,6,7,8-tetrahydrofolate + glycine + H2O = (6S)-5,6,7,8-tetrahydrofolate + L-serine. Its pathway is one-carbon metabolism; tetrahydrofolate interconversion. The protein operates within amino-acid biosynthesis; glycine biosynthesis; glycine from L-serine: step 1/1. Its function is as follows. Catalyzes the reversible interconversion of serine and glycine with tetrahydrofolate (THF) serving as the one-carbon carrier. This reaction serves as the major source of one-carbon groups required for the biosynthesis of purines, thymidylate, methionine, and other important biomolecules. Also exhibits THF-independent aldolase activity toward beta-hydroxyamino acids, producing glycine and aldehydes, via a retro-aldol mechanism. The polypeptide is Serine hydroxymethyltransferase (Bradyrhizobium diazoefficiens (strain JCM 10833 / BCRC 13528 / IAM 13628 / NBRC 14792 / USDA 110)).